The sequence spans 517 residues: Crotonobetaine/carnitine--CoA ligase (517 aa).

It belongs to the ATP-dependent AMP-binding enzyme family.

The enzyme catalyses 4-(trimethylamino)butanoate + ATP + CoA = 4-(trimethylamino)butanoyl-CoA + AMP + diphosphate. It catalyses the reaction crotonobetaine + ATP + CoA = crotonobetainyl-CoA + AMP + diphosphate. It carries out the reaction (R)-carnitine + ATP + CoA = (R)-carnitinyl-CoA + AMP + diphosphate. The protein operates within amine and polyamine metabolism; carnitine metabolism. Catalyzes the transfer of CoA to carnitine, generating the initial carnitinyl-CoA needed for the CaiB reaction cycle. Also has activity toward crotonobetaine and gamma-butyrobetaine. This is Crotonobetaine/carnitine--CoA ligase from Citrobacter koseri (strain ATCC BAA-895 / CDC 4225-83 / SGSC4696).